Here is a 334-residue protein sequence, read N- to C-terminus: tRNA-cytidine(32) 2-sulfurtransferase (334 aa).

A PP-loop motif motif is present at residues 74 to 79; it reads SGGKDS. 3 residues coordinate [4Fe-4S] cluster: Cys149, Cys152, and Cys240.

It belongs to the TtcA family. Homodimer. Mg(2+) serves as cofactor. Requires [4Fe-4S] cluster as cofactor.

It localises to the cytoplasm. The enzyme catalyses cytidine(32) in tRNA + S-sulfanyl-L-cysteinyl-[cysteine desulfurase] + AH2 + ATP = 2-thiocytidine(32) in tRNA + L-cysteinyl-[cysteine desulfurase] + A + AMP + diphosphate + H(+). It functions in the pathway tRNA modification. In terms of biological role, catalyzes the ATP-dependent 2-thiolation of cytidine in position 32 of tRNA, to form 2-thiocytidine (s(2)C32). The sulfur atoms are provided by the cysteine/cysteine desulfurase (IscS) system. This is tRNA-cytidine(32) 2-sulfurtransferase from Burkholderia ambifaria (strain ATCC BAA-244 / DSM 16087 / CCUG 44356 / LMG 19182 / AMMD) (Burkholderia cepacia (strain AMMD)).